A 270-amino-acid chain; its full sequence is Ribonuclease HII (270 aa).

In terms of domain architecture, RNase H type-2 spans 84–270 (RYIAGVDEVG…HRNSFLTKLL (187 aa)). A divalent metal cation is bound by residues aspartate 90, glutamate 91, and aspartate 186.

Belongs to the RNase HII family. Mn(2+) serves as cofactor. Mg(2+) is required as a cofactor.

The protein resides in the cytoplasm. It catalyses the reaction Endonucleolytic cleavage to 5'-phosphomonoester.. Functionally, endonuclease that specifically degrades the RNA of RNA-DNA hybrids. This chain is Ribonuclease HII, found in Clostridium beijerinckii (strain ATCC 51743 / NCIMB 8052) (Clostridium acetobutylicum).